A 146-amino-acid chain; its full sequence is Envelope protein OPG155 (146 aa).

Residues methionine 1–isoleucine 21 traverse the membrane as a helical; Signal-anchor for type II membrane protein segment. Topologically, residues glutamine 22–leucine 146 are virion surface.

It belongs to the orthopoxvirus OPG155 protein family. In terms of assembly, part of a stable entry-fusion complex (EFC) which is at least composed of proteins OPG143, OPG147, OPG155, OPG086, OPG094, OPG107, OPG104, and OPG099. Formation of the viral membrane is necessary for the assembly of the complex. Interacts directly with protein OPG107. Post-translationally, contains two intramolecular disulfide bonds. They are created by the viral disulfide bond formation pathway, a poxvirus-specific pathway that operates on the cytoplasmic side of the MV membranes.

Its subcellular location is the virion membrane. Its function is as follows. Envelope protein required for virus entry into host cell and for cell-cell fusion (syncytium formation). The polypeptide is Envelope protein OPG155 (OPG155) (Ectromelia virus (strain Moscow) (ECTV)).